Consider the following 152-residue polypeptide: Transcriptional regulator MraZ (152 aa).

SpoVT-AbrB domains follow at residues 5-51 (VNSI…PLPE) and 80-123 (AAEC…DEVL).

The protein belongs to the MraZ family. In terms of assembly, forms oligomers.

Its subcellular location is the cytoplasm. The protein resides in the nucleoid. The chain is Transcriptional regulator MraZ from Methylococcus capsulatus (strain ATCC 33009 / NCIMB 11132 / Bath).